Reading from the N-terminus, the 172-residue chain is Large ribosomal subunit protein uL10 (172 aa).

It belongs to the universal ribosomal protein uL10 family. Part of the ribosomal stalk of the 50S ribosomal subunit. The N-terminus interacts with L11 and the large rRNA to form the base of the stalk. The C-terminus forms an elongated spine to which L12 dimers bind in a sequential fashion forming a multimeric L10(L12)X complex.

Functionally, forms part of the ribosomal stalk, playing a central role in the interaction of the ribosome with GTP-bound translation factors. The chain is Large ribosomal subunit protein uL10 from Rhizobium johnstonii (strain DSM 114642 / LMG 32736 / 3841) (Rhizobium leguminosarum bv. viciae).